We begin with the raw amino-acid sequence, 212 residues long: Thymidylate kinase (212 aa).

11–18 lines the ATP pocket; sequence GPEGAGKT.

It belongs to the thymidylate kinase family.

The enzyme catalyses dTMP + ATP = dTDP + ADP. Functionally, phosphorylation of dTMP to form dTDP in both de novo and salvage pathways of dTTP synthesis. This chain is Thymidylate kinase, found in Streptococcus pneumoniae serotype 19F (strain G54).